The primary structure comprises 178 residues: Alkyl hydroperoxide reductase AhpD (178 aa).

The Proton donor role is filled by C130. C130 and C133 are disulfide-bonded. Residue C133 is the Cysteine sulfenic acid (-SOH) intermediate of the active site.

It belongs to the AhpD family. In terms of assembly, homotrimer.

It carries out the reaction N(6)-[(R)-dihydrolipoyl]-L-lysyl-[lipoyl-carrier protein] + a hydroperoxide = N(6)-[(R)-lipoyl]-L-lysyl-[lipoyl-carrier protein] + an alcohol + H2O. Functionally, antioxidant protein with alkyl hydroperoxidase activity. Required for the reduction of the AhpC active site cysteine residues and for the regeneration of the AhpC enzyme activity. The chain is Alkyl hydroperoxide reductase AhpD from Mycobacterium ulcerans (strain Agy99).